We begin with the raw amino-acid sequence, 96 residues long: uncharacterized protein (96 aa).

Helical transmembrane passes span 14 to 34 (FIEG…KYWA), 38 to 58 (LAVT…LLVL), and 67 to 87 (WPLK…GNFL).

The protein resides in the cell membrane. This is an uncharacterized protein from Bacillus subtilis (strain 168).